A 74-amino-acid polypeptide reads, in one-letter code: uncharacterized protein (74 aa).

The helical transmembrane segment at 54–72 (LIIPRFLLLIYSVIQCLFL) threads the bilayer.

The protein resides in the membrane. This is an uncharacterized protein from Saccharomyces cerevisiae (strain ATCC 204508 / S288c) (Baker's yeast).